The sequence spans 272 residues: 2-succinyl-6-hydroxy-2,4-cyclohexadiene-1-carboxylate synthase (272 aa).

The protein belongs to the AB hydrolase superfamily. MenH family. In terms of assembly, monomer.

The enzyme catalyses 5-enolpyruvoyl-6-hydroxy-2-succinyl-cyclohex-3-ene-1-carboxylate = (1R,6R)-6-hydroxy-2-succinyl-cyclohexa-2,4-diene-1-carboxylate + pyruvate. It functions in the pathway quinol/quinone metabolism; 1,4-dihydroxy-2-naphthoate biosynthesis; 1,4-dihydroxy-2-naphthoate from chorismate: step 3/7. It participates in quinol/quinone metabolism; menaquinone biosynthesis. Its function is as follows. Catalyzes a proton abstraction reaction that results in 2,5-elimination of pyruvate from 2-succinyl-5-enolpyruvyl-6-hydroxy-3-cyclohexene-1-carboxylate (SEPHCHC) and the formation of 2-succinyl-6-hydroxy-2,4-cyclohexadiene-1-carboxylate (SHCHC). The chain is 2-succinyl-6-hydroxy-2,4-cyclohexadiene-1-carboxylate synthase from Yersinia pseudotuberculosis serotype I (strain IP32953).